The following is a 226-amino-acid chain: ATP synthase F(0) complex subunit a (226 aa).

6 helical membrane passes run 9–29 (FITPTMMGLPIVILVIVFPAM), 68–88 (WALMLISLILFIGSTNLLGLV), 97–117 (QLSMNLGMAIPLWAGAVITGF), 138–158 (IPMLVVIETISLFIQPMALAI), 164–184 (ITAGHLLMHLIGGAVLALTSI), and 201–223 (ILEFAVALIQAYVFTLLVSLYLH).

This sequence belongs to the ATPase A chain family. As to quaternary structure, component of the ATP synthase complex composed at least of ATP5F1A/subunit alpha, ATP5F1B/subunit beta, ATP5MC1/subunit c (homooctomer), MT-ATP6/subunit a, MT-ATP8/subunit 8, ATP5ME/subunit e, ATP5MF/subunit f, ATP5MG/subunit g, ATP5MK/subunit k, ATP5MJ/subunit j, ATP5F1C/subunit gamma, ATP5F1D/subunit delta, ATP5F1E/subunit epsilon, ATP5PF/subunit F6, ATP5PB/subunit b, ATP5PD/subunit d, ATP5PO/subunit OSCP. ATP synthase complex consists of a soluble F(1) head domain (subunits alpha(3) and beta(3)) - the catalytic core - and a membrane F(0) domain - the membrane proton channel (subunits c, a, 8, e, f, g, k and j). These two domains are linked by a central stalk (subunits gamma, delta, and epsilon) rotating inside the F1 region and a stationary peripheral stalk (subunits F6, b, d, and OSCP). Interacts with DNAJC30; interaction is direct.

Its subcellular location is the mitochondrion inner membrane. It carries out the reaction H(+)(in) = H(+)(out). Its function is as follows. Subunit a, of the mitochondrial membrane ATP synthase complex (F(1)F(0) ATP synthase or Complex V) that produces ATP from ADP in the presence of a proton gradient across the membrane which is generated by electron transport complexes of the respiratory chain. ATP synthase complex consist of a soluble F(1) head domain - the catalytic core - and a membrane F(1) domain - the membrane proton channel. These two domains are linked by a central stalk rotating inside the F(1) region and a stationary peripheral stalk. During catalysis, ATP synthesis in the catalytic domain of F(1) is coupled via a rotary mechanism of the central stalk subunits to proton translocation. With the subunit c (ATP5MC1), forms the proton-conducting channel in the F(0) domain, that contains two crucial half-channels (inlet and outlet) that facilitate proton movement from the mitochondrial intermembrane space (IMS) into the matrix. Protons are taken up via the inlet half-channel and released through the outlet half-channel, following a Grotthuss mechanism. In Dugong dugon (Dugong), this protein is ATP synthase F(0) complex subunit a.